The chain runs to 426 residues: D-tagatose-1,6-bisphosphate aldolase subunit KbaZ (426 aa).

The protein belongs to the GatZ/KbaZ family. KbaZ subfamily. Forms a complex with KbaY.

The protein operates within carbohydrate metabolism; D-tagatose 6-phosphate degradation; D-glyceraldehyde 3-phosphate and glycerone phosphate from D-tagatose 6-phosphate: step 2/2. Functionally, component of the tagatose-1,6-bisphosphate aldolase KbaYZ that is required for full activity and stability of the Y subunit. Could have a chaperone-like function for the proper and stable folding of KbaY. When expressed alone, KbaZ does not show any aldolase activity. This Escherichia coli O17:K52:H18 (strain UMN026 / ExPEC) protein is D-tagatose-1,6-bisphosphate aldolase subunit KbaZ.